A 1237-amino-acid polypeptide reads, in one-letter code: GTPase activating protein BUD2 (1237 aa).

Over residues 79 to 110 (GSGKSSISQPPPTTSTRRNLLRKSSNLNSSDQ) the composition is skewed to low complexity. Positions 79–124 (GSGKSSISQPPPTTSTRRNLLRKSSNLNSSDQSHSKSSEDNEHQPP) are disordered. Residues 111 to 121 (SHSKSSEDNEH) are compositionally biased toward basic and acidic residues. One can recognise a C2 domain in the interval 381 to 503 (NVEHPQLYDF…KQIKTTSTIM (123 aa)). The region spanning 637 to 905 (NSQDQAVSNS…PEIYDYFDKL (269 aa)) is the Ras-GAP domain. Disordered regions lie at residues 721 to 762 (SIHE…ERER) and 969 to 1007 (NNNG…PDLD). Residues 735–754 (DVSDDDDDDDDNSSDDDADY) are compositionally biased toward acidic residues. Residues 986–996 (RDMEREQDRSR) show a composition bias toward basic and acidic residues. The stretch at 1065-1093 (NITLKDIQKQSTKIMNKIQELEIYLENYE) forms a coiled coil. The disordered stretch occupies residues 1170-1204 (NGGMGNRNGHDVNGHNNNNNNNNNNTGDGYNETDR). Positions 1183-1199 (GHNNNNNNNNNNTGDGY) are enriched in low complexity.

The protein resides in the cytoplasm. It is found in the cell cortex. Its subcellular location is the cell tip. The protein localises to the cell septum. Its function is as follows. GTPase activating protein (GAP) for RSR1 which is involved in the polarization of yeast and hyphal cells. Directs the site of new daughter cell growth in yeast and hyphal cells. Important for hyphae to maintain linear growth and necessary for hyphal responses to directional cues in the environment (tropisms). Required for correct localization of the septin rings and stabilization of the polarisome at hyphal tips. Involved in cell adhesion. This Candida albicans (strain SC5314 / ATCC MYA-2876) (Yeast) protein is GTPase activating protein BUD2 (BUD2).